Here is a 319-residue protein sequence, read N- to C-terminus: Acetyl esterase (319 aa).

The Involved in the stabilization of the negatively charged intermediate by the formation of the oxyanion hole motif lies at H91–G93. Residues S165, D262, and H292 contribute to the active site.

This sequence belongs to the 'GDXG' lipolytic enzyme family. As to quaternary structure, homodimer. Interacts with MalT and MelA.

It localises to the cytoplasm. Its function is as follows. Displays esterase activity towards short chain fatty esters (acyl chain length of up to 8 carbons). Able to hydrolyze triacetylglycerol (triacetin) and tributyrylglycerol (tributyrin), but not trioleylglycerol (triolein) or cholesterol oleate. Negatively regulates MalT activity by antagonizing maltotriose binding. Inhibits MelA galactosidase activity. This is Acetyl esterase from Escherichia coli O127:H6 (strain E2348/69 / EPEC).